A 1379-amino-acid chain; its full sequence is DNA-directed RNA polymerase subunit beta (1379 aa).

This sequence belongs to the RNA polymerase beta chain family. In terms of assembly, the RNAP catalytic core consists of 2 alpha, 1 beta, 1 beta' and 1 omega subunit. When a sigma factor is associated with the core the holoenzyme is formed, which can initiate transcription.

The enzyme catalyses RNA(n) + a ribonucleoside 5'-triphosphate = RNA(n+1) + diphosphate. DNA-dependent RNA polymerase catalyzes the transcription of DNA into RNA using the four ribonucleoside triphosphates as substrates. The sequence is that of DNA-directed RNA polymerase subunit beta from Rhizobium etli (strain ATCC 51251 / DSM 11541 / JCM 21823 / NBRC 15573 / CFN 42).